The following is a 238-amino-acid chain: 7-cyano-7-deazaguanine synthase (238 aa).

Residue 14–24 participates in ATP binding; the sequence is FSGGQDSTTCL. Zn(2+) contacts are provided by C195, C204, C207, and C210.

The protein belongs to the QueC family. It depends on Zn(2+) as a cofactor.

The catalysed reaction is 7-carboxy-7-deazaguanine + NH4(+) + ATP = 7-cyano-7-deazaguanine + ADP + phosphate + H2O + H(+). Its pathway is purine metabolism; 7-cyano-7-deazaguanine biosynthesis. Functionally, catalyzes the ATP-dependent conversion of 7-carboxy-7-deazaguanine (CDG) to 7-cyano-7-deazaguanine (preQ(0)). This Baumannia cicadellinicola subsp. Homalodisca coagulata protein is 7-cyano-7-deazaguanine synthase.